Consider the following 719-residue polypeptide: Phenylalanine--tRNA ligase beta subunit, chloroplastic (719 aa).

A B5 domain is found at 318–403 (DHALNINLSI…RIYGYHKFRS (86 aa)). Mg(2+)-binding residues include aspartate 381, aspartate 387, glutamate 390, and glutamate 391. In terms of domain architecture, FDX-ACB spans 625–718 (SKYPSIIRDL…IVKQLNLKIR (94 aa)).

This sequence belongs to the phenylalanyl-tRNA synthetase beta subunit family. Type 1 subfamily. As to quaternary structure, tetramer of two alpha and two beta subunits. The cofactor is Mg(2+).

It is found in the plastid. The protein localises to the chloroplast. It carries out the reaction tRNA(Phe) + L-phenylalanine + ATP = L-phenylalanyl-tRNA(Phe) + AMP + diphosphate + H(+). The sequence is that of Phenylalanine--tRNA ligase beta subunit, chloroplastic from Pyropia yezoensis (Susabi-nori).